The primary structure comprises 205 residues: Large ribosomal subunit protein bL25 (205 aa).

This sequence belongs to the bacterial ribosomal protein bL25 family. CTC subfamily. As to quaternary structure, part of the 50S ribosomal subunit; part of the 5S rRNA/L5/L18/L25 subcomplex. Contacts the 5S rRNA. Binds to the 5S rRNA independently of L5 and L18.

Its function is as follows. This is one of the proteins that binds to the 5S RNA in the ribosome where it forms part of the central protuberance. This is Large ribosomal subunit protein bL25 from Stutzerimonas stutzeri (strain A1501) (Pseudomonas stutzeri).